We begin with the raw amino-acid sequence, 384 residues long: 4-hydroxy-3-methylbut-2-en-1-yl diphosphate synthase (flavodoxin) (384 aa).

[4Fe-4S] cluster is bound by residues Cys272, Cys275, Cys307, and Glu314.

This sequence belongs to the IspG family. [4Fe-4S] cluster serves as cofactor.

It catalyses the reaction (2E)-4-hydroxy-3-methylbut-2-enyl diphosphate + oxidized [flavodoxin] + H2O + 2 H(+) = 2-C-methyl-D-erythritol 2,4-cyclic diphosphate + reduced [flavodoxin]. It participates in isoprenoid biosynthesis; isopentenyl diphosphate biosynthesis via DXP pathway; isopentenyl diphosphate from 1-deoxy-D-xylulose 5-phosphate: step 5/6. Converts 2C-methyl-D-erythritol 2,4-cyclodiphosphate (ME-2,4cPP) into 1-hydroxy-2-methyl-2-(E)-butenyl 4-diphosphate. The chain is 4-hydroxy-3-methylbut-2-en-1-yl diphosphate synthase (flavodoxin) from Rhodospirillum rubrum (strain ATCC 11170 / ATH 1.1.1 / DSM 467 / LMG 4362 / NCIMB 8255 / S1).